A 509-amino-acid chain; its full sequence is MASTVWGGAPWWGPPPPAPARPLTDIDFCSGAQLQELTQLIQELRVQESWSEGPKPGADLLRAKDFVFALLGLVHRQDPRFPPQAELLLLRGGIREGSLDLGHAPLGPYSRGPHYDAGFTLLVPVFSLDGTGPELLLDLESCSAWLRLPELMRGILVREAWQDCLGPPVPEESDMTHQTHSKESPTDRENSVDPSHDYVPEPEPHMSLQKSSSDLSESQSSYKDITNPETPEPLETLSSDALDADESQVPKPSEAPKAWPTLCPTQVTSWFFVKLAEVAESLIPVPGAPRLVHAARHAGVTTVLLATPEPPRHLLLFDLIPVVTVTGWPDTARSHSWAGPLVSESASFYLVPGSLPEQPSTSGWQLCFARQELALKERIPTPLLQAHAAAQALLRPLVAGTRAAAPYLLRTLLYWACERLPALYLARPENAGACCLGLLDELSRVLEAGALPHYFLSGRKLRVGDGSAALRGALAQLRGDPAQALREAVEEAKVARKGGGLAGVGGGTH.

The Extracellular portion of the chain corresponds to 1 to 312; the sequence is MASTVWGGAP…VLLATPEPPR (312 aa). The interval 167-236 is disordered; sequence PPVPEESDMT…NPETPEPLET (70 aa). Residues 174-204 are compositionally biased toward basic and acidic residues; sequence DMTHQTHSKESPTDRENSVDPSHDYVPEPEP. The segment covering 207-224 has biased composition (low complexity); sequence SLQKSSSDLSESQSSYKD. The chain crosses the membrane as a helical span at residues 313 to 329; that stretch reads HLLLFDLIPVVTVTGWP. The Cytoplasmic portion of the chain corresponds to 330–509; that stretch reads DTARSHSWAG…GLAGVGGGTH (180 aa).

As to quaternary structure, interacts with CSF2RB; this interaction occurs preferentially in the absence of CSF2.

Its subcellular location is the cell membrane. Its function is as follows. Selectively involved in CSF2 deprivation-induced apoptosis via a mitochondria-dependent pathway. The protein is Transmembrane protein 102 (Tmem102) of Mus musculus (Mouse).